Here is a 221-residue protein sequence, read N- to C-terminus: 2,3-bisphosphoglycerate-dependent phosphoglycerate mutase (221 aa).

Substrate contacts are provided by residues arginine 8–asparagine 15, threonine 21–glycine 22, arginine 60, glutamate 87–tyrosine 90, lysine 98, arginine 114–arginine 115, and glycine 174–asparagine 175. The active-site Tele-phosphohistidine intermediate is histidine 9. Glutamate 87 acts as the Proton donor/acceptor in catalysis. Residues arginine 114–serine 140 form a disordered region.

This sequence belongs to the phosphoglycerate mutase family. BPG-dependent PGAM subfamily.

It catalyses the reaction (2R)-2-phosphoglycerate = (2R)-3-phosphoglycerate. Its pathway is carbohydrate degradation; glycolysis; pyruvate from D-glyceraldehyde 3-phosphate: step 3/5. In terms of biological role, catalyzes the interconversion of 2-phosphoglycerate and 3-phosphoglycerate. The polypeptide is 2,3-bisphosphoglycerate-dependent phosphoglycerate mutase (Tropheryma whipplei (strain TW08/27) (Whipple's bacillus)).